Reading from the N-terminus, the 770-residue chain is Disabled homolog 2 (770 aa).

A compositionally biased stretch (polar residues) spans 1-16 (MSNEVETSATNGQPDQ). The tract at residues 1-38 (MSNEVETSATNGQPDQQAAPKAPSKKEKKKGPEKTDEY) is disordered. Ser-2 bears the N-acetylserine mark. Ser-2 bears the Phosphoserine mark. A PID domain is found at 45-196 (GDGVKYKAKL…KAVENGSEAL (152 aa)). Tyr-170 carries the phosphotyrosine modification. Ser-193 carries the post-translational modification Phosphoserine. Residues 230–447 (ESKDILLVDL…KPGRGRRTAK (218 aa)) form a required for localization to clathrin-coated pits region. Disordered stretches follow at residues 284–482 (LNFF…LQPN) and 604–629 (VSTQ…AGPP). 2 consecutive short sequence motifs (DPF) follow at residues 293–295 (DPF) and 298–300 (DPF). Residues 302 to 313 (QPDQSTPSSFDS) are compositionally biased toward polar residues. A phosphoserine; in mitosis mark is found at Ser-326 and Ser-328. Over residues 366 to 396 (FSSSQTQPAVRTQNGVSEREQNGFSVKSSPN) the composition is skewed to polar residues. Ser-401 is modified (phosphoserine). 3 stretches are compositionally biased toward polar residues: residues 407-425 (SIQN…SSPH), 466-480 (PSGQ…TALQ), and 604-616 (VSTQ…SSLL). Residues 604-732 (VSTQPPSMHS…SLPVTKSTDN (129 aa)) form a sufficient for interaction with GRB2 region. The interval 619–627 (PPQPPPRAG) is required for interaction with CSK. The segment at 649 to 770 (KDVKEMFKDF…YRDPFGNPFA (122 aa)) is required for interaction with MYO6. The interval 663–671 (PPAVPARKG) is required for interaction with GRB2 and CSK. Phosphoserine occurs at positions 675, 723, and 729. The interval 709 to 725 (NKINEPPKPAPRQVSLP) is sufficient for interaction with SH3KBP1 SH3 domain. A disordered region spans residues 742-770 (SFGSSQASVASSQPVSSEMYRDPFGNPFA). Residues 745–758 (SSQASVASSQPVSS) are compositionally biased toward low complexity.

Interacts (via NPXY motif) with DAB2 (via PID domain). Can interact (via PID domain) with LDLR, APP, APLP1 and APLP2, and weakly with INPP5D (via NPXY motifs); the interaction is impaired by tyrosine phosphorylation of the respective NPXY motifs. Can weakly interact (via PID domain) with LRP1 (via NPXY motif); the interaction is enhanced by tyrosine phosphorylation of the NPXY motif. Interacts with LRP2 (via NPXY motif); the interaction is not affected by tyrosine phosphorylation of the NPXY motif. Interacts with clathrin; in vitro can assemble clathrin triskelia into polyhedral coats. Interacts with AP2A2, ITGB1, ITGB3, ITGB5, PIAS2, DAB2IP, NOSTRIN, FCHO1, DVL3, EPS15, ITSN1 and EPS15L1. Interacts with SH3KBP1 (via SH3 domains). Interacts with GRB2; competes with SOS1 for binding to GRB2 and the interaction is enhanced by EGF and NT-3 stimulation. Interacts with MAP3K7; the interaction is induced by TGF-beta stimulation and may mediate TGF-beta stimulated JNK activation. Interacts with AXIN1 and PPP1CA; the interactions are mutually exclusive. Interacts with the globular tail of MYO6. Interacts (via DPF motifs) with FCHO2; the interaction is direct and required for DAB2-mediated LDLR endocytosis. Interacts with LRP6; the interaction involves LRP6 phosphorylation by CK2 and sequesters LRP6 towards clathrin-mediated endocytosis. Associates with the TGF-beta receptor complex. Interacts with SMAD2 and SMAD3; the interactions are enhanced upon TGF-beta stimulation. Interacts with GRB2; the interaction is enhanced by EGF and NT-3 stimulation. Interacts with SRC; the interaction is enhanced by EGF stimulation. In terms of processing, phosphorylated. Phosphorylation during mitosis is leading to membrane displacement. Expressed in deep invaginations, inclusion cysts and the surface epithelial cells of the ovary. Also expressed in breast epithelial cells, spleen, thymus, prostate, testis, macrophages, fibroblasts, lung epithelial cells, placenta, brain stem, heart and small intestine. Expressed in kidney proximal tubular epithelial cells (at protein level).

The protein localises to the cytoplasm. It is found in the cytoplasmic vesicle. It localises to the clathrin-coated vesicle membrane. The protein resides in the membrane. Its subcellular location is the clathrin-coated pit. Adapter protein that functions as a clathrin-associated sorting protein (CLASP) required for clathrin-mediated endocytosis of selected cargo proteins. Can bind and assemble clathrin, and binds simultaneously to phosphatidylinositol 4,5-bisphosphate (PtdIns(4,5)P2) and cargos containing non-phosphorylated NPXY internalization motifs, such as the LDL receptor, to recruit them to clathrin-coated pits. Can function in clathrin-mediated endocytosis independently of the AP-2 complex. Involved in endocytosis of integrin beta-1; this function seems to redundant with the AP-2 complex and seems to require DAB2 binding to endocytosis accessory EH domain-containing proteins such as EPS15, EPS15L1 and ITSN1. Involved in endocytosis of cystic fibrosis transmembrane conductance regulator/CFTR. Involved in endocytosis of megalin/LRP2 lipoprotein receptor during embryonal development. Required for recycling of the TGF-beta receptor. Involved in CFTR trafficking to the late endosome. Involved in several receptor-mediated signaling pathways. Involved in TGF-beta receptor signaling and facilitates phosphorylation of the signal transducer SMAD2. Mediates TFG-beta-stimulated JNK activation. May inhibit the canoniocal Wnt/beta-catenin signaling pathway by stabilizing the beta-catenin destruction complex through a competing association with axin preventing its dephosphorylation through protein phosphatase 1 (PP1). Sequesters LRP6 towards clathrin-mediated endocytosis, leading to inhibition of Wnt/beta-catenin signaling. May activate non-canonical Wnt signaling. In cell surface growth factor/Ras signaling pathways proposed to inhibit ERK activation by interrupting the binding of GRB2 to SOS1 and to inhibit SRC by preventing its activating phosphorylation at 'Tyr-419'. Proposed to be involved in modulation of androgen receptor (AR) signaling mediated by SRC activation; seems to compete with AR for interaction with SRC. Plays a role in the CSF-1 signal transduction pathway. Plays a role in cellular differentiation. Involved in cell positioning and formation of visceral endoderm (VE) during embryogenesis and proposed to be required in the VE to respond to Nodal signaling coming from the epiblast. Required for the epithelial to mesenchymal transition, a process necessary for proper embryonic development. May be involved in myeloid cell differentiation and can induce macrophage adhesion and spreading. May act as a tumor suppressor. The chain is Disabled homolog 2 (DAB2) from Homo sapiens (Human).